A 430-amino-acid chain; its full sequence is MRLLIRNAYVIPVAGSDFTGDVAVEEGRIVFAGPTGAVPGTFEADETIDATGMVATPGLVNCHTHAAMTLFRGYADDLPLMEWLTRKIWPVENLLTGDDIYWGSLLAGLEMLKSGTTTFADQYFEMDRVAQAVEEIGLRASLCRGLIGVSEHAEKALAEGCEFVRRWHGAAAGRISAMLGPHAPYTCPPAYLKKVVAASEELDVGLHIHLSETRTEIEQIKAEYGCSPIALMEETGLFHRPVLAAHCVHLSEADIKILARRGVGVAHNPQSNMKLASGIAPVVRMLAAGVRVGIGTDGAASNNDLNMVEEMRTAALLQKVAQGDPTVLPAGLVLEMATAGGARVLGLEDRIGTLEVGKRADVVLWRVNQPHLCPAHNYQAHLVYSAGRADVDTVIVDGHVVMRGRRVLTVDEETVLRQAERTARRLIESV.

The Zn(2+) site is built by His63 and His65. Positions 92, 144, and 182 each coordinate substrate. His209 lines the Zn(2+) pocket. Positions 212 and 297 each coordinate substrate. Asp297 lines the Zn(2+) pocket.

It belongs to the metallo-dependent hydrolases superfamily. MTA/SAH deaminase family. Zn(2+) is required as a cofactor.

The catalysed reaction is S-adenosyl-L-homocysteine + H2O + H(+) = S-inosyl-L-homocysteine + NH4(+). It catalyses the reaction S-methyl-5'-thioadenosine + H2O + H(+) = S-methyl-5'-thioinosine + NH4(+). Its function is as follows. Catalyzes the deamination of 5-methylthioadenosine and S-adenosyl-L-homocysteine into 5-methylthioinosine and S-inosyl-L-homocysteine, respectively. Is also able to deaminate adenosine. In Desulforudis audaxviator (strain MP104C), this protein is 5-methylthioadenosine/S-adenosylhomocysteine deaminase.